Reading from the N-terminus, the 55-residue chain is Large ribosomal subunit protein bL33 (55 aa).

This sequence belongs to the bacterial ribosomal protein bL33 family.

In Leifsonia xyli subsp. xyli (strain CTCB07), this protein is Large ribosomal subunit protein bL33.